The sequence spans 88 residues: uncharacterized protein (88 aa).

The first 22 residues, 1–22, serve as a signal peptide directing secretion; that stretch reads MGLTLKEHAEVCMALAESSASA.

This is an uncharacterized protein from Haemophilus influenzae (strain ATCC 51907 / DSM 11121 / KW20 / Rd).